The chain runs to 1300 residues: Phospholipid-transporting ATPase IK (1300 aa).

Over residues 1–11 (MGTGPAQTPRS) the composition is skewed to polar residues. The segment at 1 to 98 (MGTGPAQTPR…SLGQREDLQD (98 aa)) is disordered. At 1–149 (MGTGPAQTPR…TAKYNFYSFL (149 aa)) the chain is on the cytoplasmic side. Residues 65–74 (RRHKAQPGRA) are compositionally biased toward basic residues. Residues 150–171 (PLNLYEQFHRVSNLFFLIIIIL) form a helical membrane-spanning segment. Over 172–177 (QSIPDI) the chain is Exoplasmic loop. The chain crosses the membrane as a helical span at residues 178–197 (STLPWFSLSTPMVCLLFIRA). At 198-381 (TRDLVDDMGR…TKLDLLMNKL (184 aa)) the chain is on the cytoplasmic side. A helical transmembrane segment spans residues 382–403 (VVVIFISVVLVCLVLAFGFGFS). Residues 404–430 (VKEFKDHHYYLSGVHGSSVAAESFFVF) lie on the Exoplasmic loop side of the membrane. Residues 431–452 (WSFLILLSVTIPMSMFILSEFI) form a helical membrane-spanning segment. The Cytoplasmic segment spans residues 453–995 (YLGNSVFIDW…GRWSYVRICK (543 aa)). Residue D495 is the 4-aspartylphosphate intermediate of the active site. Positions 495, 496, 497, 596, 637, 660, 693, 763, 764, 765, 913, and 919 each coordinate ATP. Position 495 (D495) interacts with Mg(2+). Position 497 (T497) interacts with Mg(2+). D939 contacts Mg(2+). ATP contacts are provided by N942 and D943. Residue D943 participates in Mg(2+) binding. The helical transmembrane segment at 996–1016 (FLRYFFYKSMASMMVQVWFAC) threads the bilayer. Topologically, residues 1017–1028 (YNGFTGQPLYEG) are exoplasmic loop. The chain crosses the membrane as a helical span at residues 1029 to 1048 (WFLALFNLLYSTLPVLYIGL). Residues 1049–1078 (FEQDVSAEQSLEKPELYVVGQKDELFNYWV) lie on the Cytoplasmic side of the membrane. The chain crosses the membrane as a helical span at residues 1079–1100 (FVQAIAHGVTTSLVNFFMTLWI). Topologically, residues 1101 to 1112 (SRDTAGPASFSD) are exoplasmic loop. Residues 1113–1135 (HQSFAVVVALSCLLSITMEVILI) form a helical membrane-spanning segment. The Cytoplasmic portion of the chain corresponds to 1136 to 1141 (IKYWTA). Residues 1142–1162 (LCVATILLSLGFYAIMTTTTQ) form a helical membrane-spanning segment. The Exoplasmic loop portion of the chain corresponds to 1163–1182 (SFWLFRVSPTTFPFLYADLS). A helical membrane pass occupies residues 1183–1207 (VMSSPSILLVVLLSVSINTFPVLAL). Residues 1208–1300 (RVIFPALKEL…EAASSPKESQ (93 aa)) are Cytoplasmic-facing. The interval 1272-1300 (RGPGVSSDIASESLDPSDEEAASSPKESQ) is disordered.

This sequence belongs to the cation transport ATPase (P-type) (TC 3.A.3) family. Type IV subfamily. Requires Mg(2+) as cofactor. In terms of tissue distribution, isoform 3 was only detected in testis.

It is found in the cytoplasmic vesicle. It localises to the secretory vesicle. The protein localises to the acrosome membrane. The protein resides in the endoplasmic reticulum membrane. The catalysed reaction is ATP + H2O + phospholipidSide 1 = ADP + phosphate + phospholipidSide 2.. The enzyme catalyses a 1,2-diacyl-sn-glycero-3-phospho-L-serine(out) + ATP + H2O = a 1,2-diacyl-sn-glycero-3-phospho-L-serine(in) + ADP + phosphate + H(+). P4-ATPase flippase which catalyzes the hydrolysis of ATP coupled to the transport of aminophospholipids from the outer to the inner leaflet of various membranes and ensures the maintenance of asymmetric distribution of phospholipids. Phospholipid translocation also seems to be implicated in vesicle formation and in uptake of lipid signaling molecules. May be responsible for the maintenance of asymmetric distribution of phosphatidylserine (PS) in spermatozoa membranes. Involved in acrosome reactions and binding of spermatozoa to zona pellucida. The protein is Phospholipid-transporting ATPase IK of Homo sapiens (Human).